The primary structure comprises 476 residues: Serine/threonine-protein kinase WAG1 (476 aa).

The Protein kinase domain maps to 93–400 (FKLVRHLGTG…AQDIKRHEFF (308 aa)). Residues 99-107 (LGTGNLGRV) and K124 contribute to the ATP site. The active-site Proton acceptor is D219.

This sequence belongs to the protein kinase superfamily. Ser/Thr protein kinase family. In terms of tissue distribution, expressed in root tips and lateral root primordia.

It is found in the cytoplasm. It localises to the cytosol. The catalysed reaction is L-seryl-[protein] + ATP = O-phospho-L-seryl-[protein] + ADP + H(+). The enzyme catalyses L-threonyl-[protein] + ATP = O-phospho-L-threonyl-[protein] + ADP + H(+). Its function is as follows. Serine/threonine-protein kinase involved in the regulation of auxin signaling. Acts as a positive regulator of cellular auxin efflux and regulates organ development by enhancing PIN-mediated polar auxin transport. Phosphorylates conserved serine residues in the PIN auxin efflux carriers. Phosphorylation of PIN proteins is required and sufficient for apical-basal PIN polarity that enables directional intercellular auxin fluxes, which mediate differential growth, tissue patterning and organogenesis. Acts as a suppressor of root waving. This is Serine/threonine-protein kinase WAG1 (WAG1) from Arabidopsis thaliana (Mouse-ear cress).